The primary structure comprises 251 residues: Spermatogenesis-associated protein 46 (251 aa).

It localises to the nucleus membrane. Plays a role in spermiogenesis and fertilization. In Macaca fascicularis (Crab-eating macaque), this protein is Spermatogenesis-associated protein 46 (SPATA46).